The primary structure comprises 414 residues: MTQANLSETLFKPRFKHPETSTLVRRFNHGAQPPVQSALDGKTIPHWYRMINRLMWIWRGVDPREILEVQSRIVMSAAERTDNDLYDTVIGYRGGNWIYEWATQAMVWQQKACAEEDPQLSGRHWLHAATLYNIAAYPHLKGDDLAEQAQALSNRAYEEAAQRLPGTMRQMEFTVPGGAPITGFLHMPKGDGPFPTVLMCGGLDAMQTDYYSLYERYFAPRGIAMLTIDMPSVGFSSKRKLTQDSSLLHQHVLKALPNVPWVDHTRVAAFGFRFGANVAVRLAYLESPRLKAVACLGPVVHTLLSDFKCQQQVPEMYLDVLASRLGMHDASDEALRVELNRYSLKVQGLLGRRCPTPMLSGYWKNDPFSPEEDSRLITSSSADGKLLEIPFNPVYRNFDKGLQEITSWIEKRLC.

This sequence belongs to the FrsA family.

The enzyme catalyses a carboxylic ester + H2O = an alcohol + a carboxylate + H(+). In terms of biological role, catalyzes the hydrolysis of esters. In Escherichia fergusonii (strain ATCC 35469 / DSM 13698 / CCUG 18766 / IAM 14443 / JCM 21226 / LMG 7866 / NBRC 102419 / NCTC 12128 / CDC 0568-73), this protein is Esterase FrsA.